The sequence spans 167 residues: Adenylylsulfate reductase subunit beta (167 aa).

4Fe-4S ferredoxin-type domains follow at residues 1 to 35 (MPTF…LDPE) and 38 to 67 (KAFN…ARPY). [4Fe-4S] cluster-binding residues include C10, C13, C21, C25, C47, C50, C53, and C57.

As to quaternary structure, heterodimer composed of AprA and AprB. The heterodimers can dimerize to form heterotetramers. It depends on [4Fe-4S] cluster as a cofactor.

It localises to the cytoplasm. Its function is as follows. Iron-sulfur cluster subunit of the adenylylsulfate reductase which catalyzes reversibly the reduction of adenosine 5'-phosphosulfate (APS) to sulfite and AMP during dissimilatory sulfate reduction. The iron-sulfur cluster 2 is thought to accept electrons from a still unknown electron donor and transfer electrons to the iron-sulfur cluster 1 of this protein and then onto the FAD of AprA. The protein is Adenylylsulfate reductase subunit beta of Megalodesulfovibrio gigas (strain ATCC 19364 / DSM 1382 / NCIMB 9332 / VKM B-1759) (Desulfovibrio gigas).